The primary structure comprises 316 residues: Probable cell division protein WhiA (316 aa).

The segment at residues 275–309 (TLKELGEMVASGKISKSGINHRLRKLDEIAEQLRT) is a DNA-binding region (H-T-H motif).

Belongs to the WhiA family.

The protein localises to the cytoplasm. It localises to the nucleoid. Functionally, involved in cell division and chromosome segregation. May influence the activity of FtsZ. Binds DNA, but does not seem to function as a transcription factor. This is Probable cell division protein WhiA from Bacillus subtilis (strain 168).